Reading from the N-terminus, the 404-residue chain is Cysteine desulfurase IscS (404 aa).

Residues 75 to 76 (AT), N155, Q183, and 203 to 205 (SGH) each bind pyridoxal 5'-phosphate. An N6-(pyridoxal phosphate)lysine modification is found at K206. Position 243 (T243) interacts with pyridoxal 5'-phosphate. C328 functions as the Cysteine persulfide intermediate in the catalytic mechanism. C328 is a binding site for [2Fe-2S] cluster.

This sequence belongs to the class-V pyridoxal-phosphate-dependent aminotransferase family. NifS/IscS subfamily. In terms of assembly, homodimer. Forms a heterotetramer with IscU, interacts with other sulfur acceptors. Pyridoxal 5'-phosphate serves as cofactor.

The protein resides in the cytoplasm. It catalyses the reaction (sulfur carrier)-H + L-cysteine = (sulfur carrier)-SH + L-alanine. It functions in the pathway cofactor biosynthesis; iron-sulfur cluster biosynthesis. Master enzyme that delivers sulfur to a number of partners involved in Fe-S cluster assembly, tRNA modification or cofactor biosynthesis. Catalyzes the removal of elemental sulfur atoms from cysteine to produce alanine. Functions as a sulfur delivery protein for Fe-S cluster synthesis onto IscU, an Fe-S scaffold assembly protein, as well as other S acceptor proteins. The polypeptide is Cysteine desulfurase IscS (Pectobacterium carotovorum subsp. carotovorum (strain PC1)).